We begin with the raw amino-acid sequence, 462 residues long: Dipeptidyl peptidase 1 (462 aa).

The first 24 residues, 1-24 (MGPWTHSLRAALLLVLLGVCTVSS), serve as a signal peptide directing secretion. N-linked (GlcNAc...) asparagine glycans are attached at residues N29 and N53. 2 disulfide bridges follow: C30-C118 and C54-C136. Residues 135–229 (ACFVGKKMAN…TDEIQQQILS (95 aa)) constitute a propeptide that is removed on maturation. An N-linked (GlcNAc...) asparagine glycan is attached at N144. Intrachain disulfides connect C254-C297, C290-C330, and C320-C336. C257 is an active-site residue. An N-linked (GlcNAc...) asparagine glycan is attached at N275. Residues F301 and Y303 each contribute to the chloride site. Y346 is a binding site for chloride. Active-site residues include H404 and N426.

This sequence belongs to the peptidase C1 family. Tetramer of heterotrimers consisting of exclusion domain, heavy- and light chains. The cofactor is chloride. In terms of tissue distribution, broadly distributed, but higher levels found in liver, spleen, intestine, lung and kidney.

It is found in the lysosome. It carries out the reaction Release of an N-terminal dipeptide, Xaa-Yaa-|-Zaa-, except when Xaa is Arg or Lys, or Yaa or Zaa is Pro.. Functionally, thiol protease. Has dipeptidylpeptidase activity. Active against a broad range of dipeptide substrates composed of both polar and hydrophobic amino acids. Proline cannot occupy the P1 position and arginine cannot occupy the P2 position of the substrate. Can act as both an exopeptidase and endopeptidase. Activates serine proteases such as elastase, cathepsin G and granzymes A and B. This is Dipeptidyl peptidase 1 (Ctsc) from Rattus norvegicus (Rat).